The following is a 321-amino-acid chain: Gap junction delta-2 protein (321 aa).

The Cytoplasmic portion of the chain corresponds to 1–19; it reads MGEWTILERLLEAAVQQHS. A helical membrane pass occupies residues 20-42; it reads TMIGRILLTVVVIFRILIVAIVG. The Extracellular portion of the chain corresponds to 43–75; the sequence is ETVYDDEQTMFVCNTLQPGCNQACYDRAFPISH. The helical transmembrane segment at 76 to 98 threads the bilayer; the sequence is IRYWVFQIIMVCTPSLCFITYSV. At 99-197 the chain is on the cytoplasmic side; it reads HQSAKQRERR…KLRRQEGISR (99 aa). The segment at 118-141 is disordered; that stretch reads RDPPESIGGPGGTGGGGSGGGKRE. Residues 125–137 show a composition bias toward gly residues; sequence GGPGGTGGGGSGG. The helical transmembrane segment at 198 to 220 threads the bilayer; that stretch reads FYIIQVVFRNALEIGFLVGQYFL. The Extracellular segment spans residues 221-252; that stretch reads YGFSVPGLYECNRYPCIKEVECYVSRPTEKTV. A helical membrane pass occupies residues 253–275; the sequence is FLVFMFAVSGICVVLNLAELNHL. Residues 276–321 are Cytoplasmic-facing; that stretch reads GWRKIKLAVRGAQAKRKSIYEIRNKDLPRVSVPNFGRTQSSDSAYV.

The protein belongs to the connexin family. Delta-type subfamily. As to quaternary structure, a connexon is composed of a hexamer of connexins. Highly expressed in neurons.

It is found in the cell membrane. The protein resides in the cell junction. It localises to the gap junction. One gap junction consists of a cluster of closely packed pairs of transmembrane channels, the connexons, through which materials of low MW diffuse from one cell to a neighboring cell. This chain is Gap junction delta-2 protein (GJD2), found in Homo sapiens (Human).